We begin with the raw amino-acid sequence, 866 residues long: Pentatricopeptide repeat-containing protein At1g15510, chloroplastic (866 aa).

The transit peptide at 1 to 52 (MASSAQSPHFYLNPGKSNSFQSKAYKQRNVNFYWNFGIRRLFLRKSQGLSVL) directs the protein to the chloroplast. 18 PPR repeats span residues 58 to 92 (STHFSNSQLHGLCANGKLEEAMKLLNSMQELRVAV), 93 to 123 (DEDVFVALVRLCEWKRAQEEGSKVYSIALSS), 128 to 158 (GVELGNAFLAMFVRFGNLVDAWYVFGKMSER), 159 to 194 (NLFSWNVLVGGYAKQGYFDEAMCLYHRMLWVGGVKP), 195 to 229 (DVYTFPCVLRTCGGIPDLARGKEVHVHVVRYGYEL), 230 to 260 (DIDVVNALITMYVKCGDVKSARLLFDRMPRR), 261 to 295 (DIISWNAMISGYFENGMCHEGLELFFAMRGLSVDP), 296 to 330 (DLMTLTSVISACELLGDRRLGRDIHAYVITTGFAV), 331 to 365 (DISVCNSLTQMYLNAGSWREAEKLFSRMERKDIVS), 366 to 396 (WTTMISGYEYNFLPDKAIDTYRMMDQDSVKP), 397 to 431 (DEITVAAVLSACATLGDLDTGVELHKLAIKARLIS), 432 to 466 (YVIVANNLINMYSKCKCIDKALDIFHNIPRKNVIS), 467 to 493 (WTSIIAGLRLNNRCFEALIFLRQMKMT), 497 to 531 (NAITLTAALAACARIGALMCGKEIHAHVLRTGVGL), 532 to 561 (DDFLPNALLDMYVRCGRMNTAWSQFNSQKK), 562 to 596 (DVTSWNILLTGYSERGQGSMVVELFDRMVKSRVRP), 597 to 631 (DEITFISLLCGCSKSQMVRQGLMYFSKMEDYGVTP), and 632 to 662 (NLKHYACVVDLLGRAGELQEAHKFIQKMPVT). The tract at residues 667–742 (VWGALLNACR…DAGCSWVEVK (76 aa)) is type E motif. Residues 743–773 (GKVHAFLSDDKYHPQTKEINTVLEGFYEKMS) are type E(+) motif. Positions 774–866 (EVGLTKISES…FKDGECSCGD (93 aa)) are type DYW motif.

Belongs to the PPR family. PCMP-H subfamily.

The protein resides in the plastid. The protein localises to the chloroplast. Functionally, regulates the RNA editing of the chloroplast transcript accD, and is essential for the early stages of chloroplast biogenesis. Required for the RNA editing of the chloroplast transcript ndhF. The chain is Pentatricopeptide repeat-containing protein At1g15510, chloroplastic (PCMP-H73) from Arabidopsis thaliana (Mouse-ear cress).